The primary structure comprises 100 residues: MELSPREKDKLLIFTAALLAERRKARGLKLNYPEAVAFITAAIMEGARDGKTVAELMGYGATLLTRDDVMEGVPEMIPEIQVEATFPDGTKLVTVHQPIP.

The protein belongs to the urease gamma subunit family. As to quaternary structure, heterotrimer of UreA (gamma), UreB (beta) and UreC (alpha) subunits. Three heterotrimers associate to form the active enzyme.

It is found in the cytoplasm. It carries out the reaction urea + 2 H2O + H(+) = hydrogencarbonate + 2 NH4(+). Its pathway is nitrogen metabolism; urea degradation; CO(2) and NH(3) from urea (urease route): step 1/1. The chain is Urease subunit gamma from Methylobacillus flagellatus (strain ATCC 51484 / DSM 6875 / VKM B-1610 / KT).